The sequence spans 122 residues: MTATHNHYLAVLGEDFVAQQYANEGYDITARNVSFSVGEIDIIATSPQGEVVFIEVKTRSSSLMDAAEAVTPTKMRKIHRAASKWLQGKPFADIRFDVVAVHVDEYGELDMTRYQGVEHGAC.

Belongs to the UPF0102 family.

This chain is UPF0102 protein DIP1513, found in Corynebacterium diphtheriae (strain ATCC 700971 / NCTC 13129 / Biotype gravis).